A 413-amino-acid polypeptide reads, in one-letter code: MVVDTKLYDILEVHFEASAEEIKKSYKRLALLHHPDKAPIHEKEEAAERFRGVQEAYDILKDPESREMYDMYGMNSDSNSQFDGGVNLDDVLAQMFGMNFEAGGPGKNVPRDRKRRGSDVIHDYEISLEDMFKGKEVKLRATRNTLCPRCQGRGGKRFAKEKPCLSCDGKGVKQHLKHVGPHHVTNSQVICDTCNGKGVSFRGKDRCKHCKGSGTVPEQRMLSFFVNRSAKENDKIIQRGMADEAYGITPGDVILQLHQKPHPVFERLGDDLKAKLKISLAEALTGFNRVILTTLDGRGLEYVQPIGKILHPGDCLIIPGEGMYKDSKTDLRGDLYLEVDIEFPKDGLIGTTEIEILRDILPSIPKVSVMDDTLIDSVRGVPGDISHFGGDARYANEDYGDETYEGVPECQAQ.

Residues 6–73 (KLYDILEVHF…ESREMYDMYG (68 aa)) form the J domain. Residues 134-219 (GKEVKLRATR…CKGSGTVPEQ (86 aa)) form a CR-type zinc finger. 4 CXXCXGXG motif repeats span residues 147-154 (CPRCQGRG), 164-171 (CLSCDGKG), 191-198 (CDTCNGKG), and 207-214 (CKHCKGSG). Cysteine 410 bears the Cysteine methyl ester mark. A lipid anchor (S-farnesyl cysteine) is attached at cysteine 410. Positions 411–413 (QAQ) are cleaved as a propeptide — removed in mature form.

Its subcellular location is the endoplasmic reticulum membrane. The polypeptide is DnaJ protein homolog xdj1 (xdj1) (Schizosaccharomyces pombe (strain 972 / ATCC 24843) (Fission yeast)).